The following is an 824-amino-acid chain: Frameshifted structural polyprotein (824 aa).

The segment covering Met1–Tyr10 has biased composition (polar residues). The interval Met1–Arg104 is disordered. The span at Arg22 to Leu44 shows a compositional bias: low complexity. A host transcription inhibition region spans residues Arg36 to Lys68. The span at Lys60 to Gln72 shows a compositional bias: basic residues. The short motif at Pro61–Pro99 is the Nuclear localization signal element. The segment covering Lys73–Lys85 has biased composition (low complexity). Positions Lys84 to Ile114 are binding to the viral RNA. Basic residues predominate over residues Gln86–Arg101. Ribosome-binding stretches follow at residues Lys91–Gly100 and Pro99–Cys113. A disulfide bridge connects residues Cys113 and Cys128. Residues Cys113–Trp261 form the Peptidase S3 domain. The Charge relay system role is filled by His139. Positions Ile144 to Phe154 match the Nuclear export signal motif. Asp161 acts as the Charge relay system in catalysis. Residues Pro183–Ala193 are dimerization of the capsid protein. Residue Ser213 is the Charge relay system of the active site. The segment at Asp219 to Arg223 is dimerization of the capsid protein. The functions as an uncleaved signal peptide for the precursor of protein E3/E2 stretch occupies residues Ser262–Thr274. The Extracellular segment spans residues Ser262 to Thr692. N-linked (GlcNAc...) asparagine; by host glycans are attached at residues Asn273, Asn588, and Asn670. A helical transmembrane segment spans residues Val693–Met713. The Cytoplasmic portion of the chain corresponds to Cys714–Ala748. Residues Cys721, Cys741, and Cys742 are each lipidated (S-palmitoyl cysteine; by host). The tract at residues Cys721 to Cys741 is transient transmembrane before p62-6K protein processing. At Ala749 to Gln763 the chain is on the extracellular side. Residues Pro764–Leu784 form a helical membrane-spanning segment. At Arg785 to Ala795 the chain is on the cytoplasmic side.

This sequence belongs to the alphavirus frameshifted structural polyprotein family. Homodimer. Homomultimer. Interacts with host karyopherin KPNA4; this interaction allows the nuclear import of the viral capsid protein. Interacts with spike glycoprotein E2. Interacts with host IRAK1; the interaction leads to inhibition of IRAK1-dependent signaling. In terms of assembly, the precursor of protein E3/E2 and E1 form a heterodimer shortly after synthesis. As to quaternary structure, processing of the precursor of protein E3/E2 into E2 and E3 results in a heterodimer of the spike glycoproteins E2 and E1. Spike at virion surface are constituted of three E2-E1 heterodimers. Interacts with 6K protein. Interacts with host MXRA8; this interaction mediates virus entry. In terms of processing, specific enzymatic cleavages in vivo yield mature proteins. Capsid protein is auto-cleaved during polyprotein translation, unmasking a signal peptide at the N-terminus of the precursor of E3/E2. The remaining polyprotein is then targeted to the host endoplasmic reticulum, where host signal peptidase cleaves it into pE2 and TF. pE2 is further processed to mature E3 and E2 by host furin in trans-Golgi vesicle. Post-translationally, palmitoylated via thioester bonds. These palmitoylations may induce disruption of the C-terminus transmembrane. This would result in the reorientation of E2 C-terminus from lumenal to cytoplasmic side. Palmitoylated via thioester bonds.

Its subcellular location is the virion. The protein resides in the host cytoplasm. It localises to the host cell membrane. It is found in the host nucleus. The protein localises to the virion membrane. It carries out the reaction Autocatalytic release of the core protein from the N-terminus of the togavirus structural polyprotein by hydrolysis of a -Trp-|-Ser- bond.. Functionally, forms an icosahedral capsid with a T=4 symmetry composed of 240 copies of the capsid protein surrounded by a lipid membrane through which penetrate 80 spikes composed of trimers of E1-E2 heterodimers. The capsid protein binds to the viral RNA genome at a site adjacent to a ribosome binding site for viral genome translation following genome release. Possesses a protease activity that results in its autocatalytic cleavage from the nascent structural protein. Following its self-cleavage, the capsid protein transiently associates with ribosomes, and within several minutes the protein binds to viral RNA and rapidly assembles into icosahedric core particles. The resulting nucleocapsid eventually associates with the cytoplasmic domain of the spike glycoprotein E2 at the cell membrane, leading to budding and formation of mature virions. In case of infection, new virions attach to target cells and after clathrin-mediated endocytosis their membrane fuses with the host endosomal membrane. This leads to the release of the nucleocapsid into the cytoplasm, followed by an uncoating event necessary for the genomic RNA to become accessible. The uncoating might be triggered by the interaction of capsid proteins with ribosomes. Binding of ribosomes would release the genomic RNA since the same region is genomic RNA-binding and ribosome-binding. Specifically inhibits interleukin-1 receptor-associated kinase 1/IRAK1-dependent signaling during viral entry, representing a means by which the alphaviruses may evade innate immune detection and activation prior to viral gene expression. Its function is as follows. Provides the signal sequence for the translocation of the precursor of protein E3/E2 to the host endoplasmic reticulum. Furin-cleaved E3 remains associated with spike glycoprotein E1 and mediates pH protection of the latter during the transport via the secretory pathway. After virion release from the host cell, the assembly protein E3 is gradually released in the extracellular space. Plays a role in viral attachment to target host cell, by binding to the cell receptor. Synthesized as a p62 precursor which is processed by furin at the cell membrane just before virion budding, giving rise to E2-E1 heterodimer. The p62-E1 heterodimer is stable, whereas E2-E1 is unstable and dissociate at low pH. p62 is processed at the last step, presumably to avoid E1 fusion activation before its final export to cell surface. E2 C-terminus contains a transitory transmembrane that would be disrupted by palmitoylation, resulting in reorientation of the C-terminal tail from lumenal to cytoplasmic side. This step is critical since E2 C-terminus is involved in budding by interacting with capsid proteins. This release of E2 C-terminus in cytoplasm occurs lately in protein export, and precludes premature assembly of particles at the endoplasmic reticulum membrane. In terms of biological role, plays a role in viral assembly and release. The polypeptide is Frameshifted structural polyprotein (Aedes aegypti (Yellowfever mosquito)).